A 120-amino-acid polypeptide reads, in one-letter code: uncharacterized protein (120 aa).

The protein localises to the mitochondrion. This is an uncharacterized protein from Arabidopsis thaliana (Mouse-ear cress).